The following is a 249-amino-acid chain: Tryptophan synthase alpha chain (249 aa).

Active-site proton acceptor residues include Glu43 and Asp54.

Belongs to the TrpA family. Tetramer of two alpha and two beta chains.

The catalysed reaction is (1S,2R)-1-C-(indol-3-yl)glycerol 3-phosphate + L-serine = D-glyceraldehyde 3-phosphate + L-tryptophan + H2O. Its pathway is amino-acid biosynthesis; L-tryptophan biosynthesis; L-tryptophan from chorismate: step 5/5. Functionally, the alpha subunit is responsible for the aldol cleavage of indoleglycerol phosphate to indole and glyceraldehyde 3-phosphate. The chain is Tryptophan synthase alpha chain from Campylobacter jejuni subsp. doylei (strain ATCC BAA-1458 / RM4099 / 269.97).